The chain runs to 185 residues: Ribosome-recycling factor (185 aa).

Belongs to the RRF family.

The protein localises to the cytoplasm. Functionally, responsible for the release of ribosomes from messenger RNA at the termination of protein biosynthesis. May increase the efficiency of translation by recycling ribosomes from one round of translation to another. This is Ribosome-recycling factor from Legionella pneumophila (strain Paris).